The primary structure comprises 273 residues: Ribosomal RNA small subunit methyltransferase A (273 aa).

The S-adenosyl-L-methionine site is built by Asn-18, Leu-20, Gly-45, Glu-66, Asp-91, and Asn-113.

This sequence belongs to the class I-like SAM-binding methyltransferase superfamily. rRNA adenine N(6)-methyltransferase family. RsmA subfamily.

It localises to the cytoplasm. It carries out the reaction adenosine(1518)/adenosine(1519) in 16S rRNA + 4 S-adenosyl-L-methionine = N(6)-dimethyladenosine(1518)/N(6)-dimethyladenosine(1519) in 16S rRNA + 4 S-adenosyl-L-homocysteine + 4 H(+). Specifically dimethylates two adjacent adenosines (A1518 and A1519) in the loop of a conserved hairpin near the 3'-end of 16S rRNA in the 30S particle. May play a critical role in biogenesis of 30S subunits. This Shigella boydii serotype 18 (strain CDC 3083-94 / BS512) protein is Ribosomal RNA small subunit methyltransferase A.